The chain runs to 375 residues: Homeobox protein Meis3 (375 aa).

Residues 25–51 (PETVPAVPGPYGPHRPPQPLPPGLDSD) are disordered. The segment covering 31-46 (VPGPYGPHRPPQPLPP) has biased composition (pro residues). Positions 96–179 (GGDVCSSDSF…PIDLVIEDRD (84 aa)) constitute an MEIS N-terminal domain. Disordered regions lie at residues 197-268 (PDQN…KRGI) and 329-348 (NRTGQGAAFSPEGQPIGGYT). A compositionally biased stretch (low complexity) spans 227–241 (SQSGDNSSDQGDGLD). The homeobox; TALE-type DNA-binding region spans 262–324 (RNKKRGIFPK…NARRRIVQPM (63 aa)).

The protein belongs to the TALE/MEIS homeobox family.

The protein localises to the nucleus. Transcriptional regulator which directly modulates PDPK1 expression, thus promoting survival of pancreatic beta-cells. Also regulates expression of NDFIP1, BNIP3, and CCNG1. The sequence is that of Homeobox protein Meis3 (MEIS3) from Homo sapiens (Human).